Here is a 606-residue protein sequence, read N- to C-terminus: DNA ligase (606 aa).

Residue glutamate 263 coordinates ATP. Lysine 265 serves as the catalytic N6-AMP-lysine intermediate. Positions 270, 285, 315, 355, 432, and 438 each coordinate ATP.

Belongs to the ATP-dependent DNA ligase family. Mg(2+) serves as cofactor. The cofactor is Mn(2+).

It carries out the reaction ATP + (deoxyribonucleotide)n-3'-hydroxyl + 5'-phospho-(deoxyribonucleotide)m = (deoxyribonucleotide)n+m + AMP + diphosphate.. It catalyses the reaction ADP + (deoxyribonucleotide)n-3'-hydroxyl + 5'-phospho-(deoxyribonucleotide)m = (deoxyribonucleotide)n+m + AMP + phosphate.. The catalysed reaction is GTP + (deoxyribonucleotide)n-3'-hydroxyl + 5'-phospho-(deoxyribonucleotide)m = (deoxyribonucleotide)n+m + GMP + diphosphate.. Functionally, DNA ligase that seals nicks in double-stranded DNA during DNA replication, DNA recombination and DNA repair. Can use ATP, ADP and GTP, but not CTP, TTP or NAD(+). This chain is DNA ligase, found in Sulfophobococcus zilligii.